The following is a 161-amino-acid chain: uncharacterized protein (161 aa).

The stretch at 1 to 29 (MTLYDTVKELQEKLRNGEIEINTFLERLG) forms a coiled coil.

This is an uncharacterized protein from Acidianus convivator (ATV).